The chain runs to 379 residues: UDP-4-amino-4-deoxy-L-arabinose--oxoglutarate aminotransferase (379 aa).

Lys182 is subject to N6-(pyridoxal phosphate)lysine.

Belongs to the DegT/DnrJ/EryC1 family. ArnB subfamily. In terms of assembly, homodimer. Requires pyridoxal 5'-phosphate as cofactor.

The enzyme catalyses UDP-4-amino-4-deoxy-beta-L-arabinose + 2-oxoglutarate = UDP-beta-L-threo-pentopyranos-4-ulose + L-glutamate. The protein operates within nucleotide-sugar biosynthesis; UDP-4-deoxy-4-formamido-beta-L-arabinose biosynthesis; UDP-4-deoxy-4-formamido-beta-L-arabinose from UDP-alpha-D-glucuronate: step 2/3. It participates in bacterial outer membrane biogenesis; lipopolysaccharide biosynthesis. Functionally, catalyzes the conversion of UDP-4-keto-arabinose (UDP-Ara4O) to UDP-4-amino-4-deoxy-L-arabinose (UDP-L-Ara4N). The modified arabinose is attached to lipid A and is required for resistance to polymyxin and cationic antimicrobial peptides. This Escherichia coli O127:H6 (strain E2348/69 / EPEC) protein is UDP-4-amino-4-deoxy-L-arabinose--oxoglutarate aminotransferase.